The sequence spans 595 residues: Actin-histidine N-methyltransferase (595 aa).

Positions 1 to 22 (MGKKSRVKTQKSGTGATATVSP) are disordered. Positions 10 to 20 (QKSGTGATATV) are enriched in polar residues. S-adenosyl-L-methionine-binding positions include R75, 104 to 106 (EGF), R254, 275 to 279 (DMCNH), and 325 to 327 (SGF). The region spanning 94–314 (EGFEMVNFKE…AGEQIYIFYG (221 aa)) is the SET domain. At S513 the chain carries Phosphoserine. A compositionally biased stretch (polar residues) spans 549–563 (ENGLVNGENSIPNGT). The interval 549–595 (ENGLVNGENSIPNGTRSEDENLNQEESKRAVEDAKGSSSDRADAVKE) is disordered. A compositionally biased stretch (basic and acidic residues) spans 573–595 (EESKRAVEDAKGSSSDRADAVKE).

It belongs to the class V-like SAM-binding methyltransferase superfamily. SETD3 actin-histidine methyltransferase family. In terms of assembly, interacts with MYOD1. Phosphorylated by GSK3B, which is required for recognition by the SCF(FBXW7) complex and subsequent degradation. In terms of processing, ubiquitinated by the SCF(FBXW7) complex following phosphorylation by GSK3B, leading to its degradation by the proteasome.

The protein resides in the cytoplasm. Its subcellular location is the nucleus. The catalysed reaction is L-histidyl-[protein] + S-adenosyl-L-methionine = N(tele)-methyl-L-histidyl-[protein] + S-adenosyl-L-homocysteine + H(+). Its function is as follows. Protein-histidine N-methyltransferase that specifically mediates 3-methylhistidine (tele-methylhistidine) methylation of actin at 'His-73'. Histidine methylation of actin is required for smooth muscle contraction of the laboring uterus during delivery. Does not have protein-lysine N-methyltransferase activity and probably only catalyzes histidine methylation of actin. This is Actin-histidine N-methyltransferase from Callithrix jacchus (White-tufted-ear marmoset).